We begin with the raw amino-acid sequence, 438 residues long: sn-glycerol-3-phosphate-binding periplasmic protein UgpB (438 aa).

The N-terminal stretch at 1–23 (MISLRHTALGLALSLAFTGQALA) is a signal peptide. Positions 65, 89, 144, 270, 307, 346, and 397 each coordinate sn-glycerol 3-phosphate.

It belongs to the bacterial solute-binding protein 1 family. The complex is composed of two ATP-binding proteins (UgpC), two transmembrane proteins (UgpA and UgpE) and a solute-binding protein (UgpB).

The protein localises to the periplasm. Part of the ABC transporter complex UgpBAEC involved in sn-glycerol-3-phosphate (G3P) import. Binds G3P. In Salmonella typhi, this protein is sn-glycerol-3-phosphate-binding periplasmic protein UgpB (ugpB).